A 351-amino-acid polypeptide reads, in one-letter code: L-threonine 3-dehydrogenase (351 aa).

C39 provides a ligand contact to Zn(2+). Residues T41 and H44 each act as charge relay system in the active site. Zn(2+) contacts are provided by H64, E65, C94, C97, C100, and C108. NAD(+)-binding positions include I176, D196, R201, 271–273 (LGI), and 295–296 (IY).

Belongs to the zinc-containing alcohol dehydrogenase family. Homotetramer. Zn(2+) is required as a cofactor.

It is found in the cytoplasm. The catalysed reaction is L-threonine + NAD(+) = (2S)-2-amino-3-oxobutanoate + NADH + H(+). Its pathway is amino-acid degradation; L-threonine degradation via oxydo-reductase pathway; glycine from L-threonine: step 1/2. Its function is as follows. Catalyzes the NAD(+)-dependent oxidation of L-threonine to 2-amino-3-ketobutyrate. This is L-threonine 3-dehydrogenase from Francisella tularensis subsp. holarctica (strain OSU18).